Here is a 508-residue protein sequence, read N- to C-terminus: MVGTHMDESVDIVLVGAGVMSATLATLLHELEPDARIEIIERLDSTASESSFAWNNAGTGHAGLCELNYTPRADDGSISLDKAIHTNTLFEESKQFWSYLVEKGNLGDPGRFVHPVPHMSFVRGEDDVRFLRDRYHAMREHPCFEGMEYTEDRSVIGQWAPLLLDGREGDEPLAATRVATGTDVDFGALTRQLLARLEEKPDEQVRITTGQTVEDLTRNEDGSWRIKIAGNDDTQRTLNARFVFLGAGGASLHLLQKSGIPEGKGYAGFPVSGQWLRCDKPEIVSRHNAKVYSKAPIGAPPMSVPHLDTRNVDGSPSLLFGPFAGFTTKFLKTGSVMDLAKSVRSSNLSPMLSVARDNFSLVKYLIDQVRLSHEQRVDELRTFYPMAKNDDWRLEVAGQRVQVIKKDPQKGGILQFGTEVVAASDGSLAALLGASPGASTATSIMLNLVEQCFPEKFASQAWQQRLHDLVPARAETLADNGDLLRDVRRRTHDTLKLVDTQPSPEPVT.

Belongs to the MQO family. FAD is required as a cofactor.

The catalysed reaction is (S)-malate + a quinone = a quinol + oxaloacetate. It participates in carbohydrate metabolism; tricarboxylic acid cycle; oxaloacetate from (S)-malate (quinone route): step 1/1. The sequence is that of Probable malate:quinone oxidoreductase from Chromohalobacter salexigens (strain ATCC BAA-138 / DSM 3043 / CIP 106854 / NCIMB 13768 / 1H11).